We begin with the raw amino-acid sequence, 626 residues long: ATP-dependent RNA helicase dbp-8 (626 aa).

A compositionally biased stretch (low complexity) spans 1–25 (MPSATAAKAKKANANANLKSKVNKA). A disordered region spans residues 1–183 (MPSATAAKAK…ATPALPVPEP (183 aa)). Residues 40 to 98 (DESDFGSELDVEDESAASDEEDEDEDEDEHDLEEGVSDEGEGVSDEEEGVSDEDEDEEN) show a composition bias toward acidic residues. A compositionally biased stretch (basic and acidic residues) spans 161 to 173 (KQAEAPKTEKTEE). Residues 195–223 (TTFDALNVRPWLVQSLANMAIKRPTGIQK) carry the Q motif motif. The 181-residue stretch at 226–406 (IPEILKGRDC…ERPPIPGRAP (181 aa)) folds into the Helicase ATP-binding domain. 239-246 (SRTGSGKT) provides a ligand contact to ATP. The DEAD box signature appears at 348–351 (DEAD). Residues 438-589 (YLHMFLLTPQ…GVNLETRVIR (152 aa)) enclose the Helicase C-terminal domain.

This sequence belongs to the DEAD box helicase family. DDX49/DBP8 subfamily.

The protein localises to the nucleus. It localises to the nucleolus. It catalyses the reaction ATP + H2O = ADP + phosphate + H(+). Its function is as follows. ATP-binding RNA helicase involved in 40S ribosomal subunit biogenesis and is required for the normal formation of 18S rRNAs through pre-rRNA processing at A0, A1 and A2 sites. Required for vegetative growth. The sequence is that of ATP-dependent RNA helicase dbp-8 (dbp-8) from Neurospora crassa (strain ATCC 24698 / 74-OR23-1A / CBS 708.71 / DSM 1257 / FGSC 987).